An 851-amino-acid chain; its full sequence is Glycogen phosphorylase, liver form (851 aa).

Ala-2 carries the N-acetylalanine modification. Ser-15 carries the post-translational modification Phosphoserine; by PHK; in form phosphorylase a. Residues 43–45 (DRN), Tyr-76, and Arg-310 contribute to the AMP site. N6-succinyllysine is present on Lys-364. Lys-470 carries the N6-acetyllysine modification. Ser-524, Ser-561, and Ser-639 each carry phosphoserine. Lys-681 is modified (N6-(pyridoxal phosphate)lysine). Residue Lys-796 is modified to N6-acetyllysine.

The protein belongs to the glycogen phosphorylase family. In terms of assembly, homodimer; enzymatically active. Interacts with PPP1R3B; recruits the phosphatase PP1 which dephosphorylates and inactivates PYGL/glycogen phosphorylase. It depends on pyridoxal 5'-phosphate as a cofactor. Post-translationally, acetylation, which is up-regulated by glucose and insulin and down-regulated by glucagon, inhibits the glycogen phosphorylase activity by promoting PPP1R3B-mediated recruitment of phosphatase PP1 and Ser-15 dephosphorylation. Phosphorylation at Ser-15 converts inactive phosphorylase b into active phosphorylase a. Dephosphorylation of Ser-15 by phosphatase PP1 inactivates the enzyme.

The protein localises to the cytoplasm. It localises to the cytosol. The catalysed reaction is [(1-&gt;4)-alpha-D-glucosyl](n) + phosphate = [(1-&gt;4)-alpha-D-glucosyl](n-1) + alpha-D-glucose 1-phosphate. Its activity is regulated as follows. Allosterically regulated through the non-covalent binding of metabolites, being activated by AMP and inhibited by ATP, ADP, and glucose-6-phosphate. The activity is also controlled by post-translational modifications including phosphorylation and acetylation. Functionally, allosteric enzyme that catalyzes the rate-limiting step in glycogen catabolism, the phosphorolytic cleavage of glycogen to produce glucose-1-phosphate, and plays a central role in maintaining cellular and organismal glucose homeostasis. In Ovis aries (Sheep), this protein is Glycogen phosphorylase, liver form.